The following is a 148-amino-acid chain: Large-conductance mechanosensitive channel (148 aa).

The next 2 membrane-spanning stretches (helical) occupy residues 9–29 (AFAV…GAAF) and 79–99 (IQTV…VKAI).

The protein belongs to the MscL family. Homopentamer.

The protein localises to the cell inner membrane. Its function is as follows. Channel that opens in response to stretch forces in the membrane lipid bilayer. May participate in the regulation of osmotic pressure changes within the cell. The protein is Large-conductance mechanosensitive channel of Pseudomonas syringae pv. syringae (strain B728a).